The primary structure comprises 121 residues: Small ribosomal subunit protein uS13 (121 aa).

A disordered region spans residues 92–121 (KRGLPVRGQRTRTNARTRKGPRRAAASLKK).

It belongs to the universal ribosomal protein uS13 family. In terms of assembly, part of the 30S ribosomal subunit. Forms a loose heterodimer with protein S19. Forms two bridges to the 50S subunit in the 70S ribosome.

Its function is as follows. Located at the top of the head of the 30S subunit, it contacts several helices of the 16S rRNA. In the 70S ribosome it contacts the 23S rRNA (bridge B1a) and protein L5 of the 50S subunit (bridge B1b), connecting the 2 subunits; these bridges are implicated in subunit movement. Contacts the tRNAs in the A and P-sites. This is Small ribosomal subunit protein uS13 from Bordetella bronchiseptica (strain ATCC BAA-588 / NCTC 13252 / RB50) (Alcaligenes bronchisepticus).